We begin with the raw amino-acid sequence, 210 residues long: Fibrillarin-like rRNA/tRNA 2'-O-methyltransferase (210 aa).

The disordered stretch occupies residues 1-34 (MTLPSGVERHDFGGETSLATQGQPVYGERTDGDW). S-adenosyl-L-methionine is bound by residues 71-72 (TT), 87-88 (EF), 112-113 (DA), and 132-135 (DVAT).

Belongs to the methyltransferase superfamily. Fibrillarin family. In terms of assembly, interacts with nop5. Component of box C/D small ribonucleoprotein (sRNP) particles that contain rpl7ae, FlpA and nop5, plus a guide RNA.

Functionally, involved in pre-rRNA and tRNA processing. Utilizes the methyl donor S-adenosyl-L-methionine to catalyze the site-specific 2'-hydroxyl methylation of ribose moieties in rRNA and tRNA. Site specificity is provided by a guide RNA that base pairs with the substrate. Methylation occurs at a characteristic distance from the sequence involved in base pairing with the guide RNA. This is Fibrillarin-like rRNA/tRNA 2'-O-methyltransferase from Haloarcula marismortui (strain ATCC 43049 / DSM 3752 / JCM 8966 / VKM B-1809) (Halobacterium marismortui).